The chain runs to 159 residues: Protein-export protein SecB (159 aa).

It belongs to the SecB family. Homotetramer, a dimer of dimers. One homotetramer interacts with 1 SecA dimer.

It localises to the cytoplasm. In terms of biological role, one of the proteins required for the normal export of preproteins out of the cell cytoplasm. It is a molecular chaperone that binds to a subset of precursor proteins, maintaining them in a translocation-competent state. It also specifically binds to its receptor SecA. The polypeptide is Protein-export protein SecB (Aromatoleum aromaticum (strain DSM 19018 / LMG 30748 / EbN1) (Azoarcus sp. (strain EbN1))).